We begin with the raw amino-acid sequence, 456 residues long: Bifunctional protein GlmU (456 aa).

The pyrophosphorylase stretch occupies residues 1-229; sequence MLNNAMSVVI…LSEVEGVNNR (229 aa). UDP-N-acetyl-alpha-D-glucosamine is bound by residues 11 to 14, K25, Q76, 81 to 82, 103 to 105, G140, E154, N169, and N227; these read LAAG, GT, and YGD. D105 is a Mg(2+) binding site. A Mg(2+)-binding site is contributed by N227. Positions 230-250 are linker; sequence LQLSRLERVYQSEQAEKLLLA. The interval 251-456 is N-acetyltransferase; sequence GVMLRDPARF…EGWRRPVKKK (206 aa). UDP-N-acetyl-alpha-D-glucosamine is bound by residues R333 and K351. Catalysis depends on H363, which acts as the Proton acceptor. 2 residues coordinate UDP-N-acetyl-alpha-D-glucosamine: Y366 and N377. Residues A380, 386-387, S405, A423, and R440 contribute to the acetyl-CoA site; that span reads NY.

It in the N-terminal section; belongs to the N-acetylglucosamine-1-phosphate uridyltransferase family. This sequence in the C-terminal section; belongs to the transferase hexapeptide repeat family. In terms of assembly, homotrimer. It depends on Mg(2+) as a cofactor.

It is found in the cytoplasm. The enzyme catalyses alpha-D-glucosamine 1-phosphate + acetyl-CoA = N-acetyl-alpha-D-glucosamine 1-phosphate + CoA + H(+). It catalyses the reaction N-acetyl-alpha-D-glucosamine 1-phosphate + UTP + H(+) = UDP-N-acetyl-alpha-D-glucosamine + diphosphate. It functions in the pathway nucleotide-sugar biosynthesis; UDP-N-acetyl-alpha-D-glucosamine biosynthesis; N-acetyl-alpha-D-glucosamine 1-phosphate from alpha-D-glucosamine 6-phosphate (route II): step 2/2. The protein operates within nucleotide-sugar biosynthesis; UDP-N-acetyl-alpha-D-glucosamine biosynthesis; UDP-N-acetyl-alpha-D-glucosamine from N-acetyl-alpha-D-glucosamine 1-phosphate: step 1/1. It participates in bacterial outer membrane biogenesis; LPS lipid A biosynthesis. Functionally, catalyzes the last two sequential reactions in the de novo biosynthetic pathway for UDP-N-acetylglucosamine (UDP-GlcNAc). The C-terminal domain catalyzes the transfer of acetyl group from acetyl coenzyme A to glucosamine-1-phosphate (GlcN-1-P) to produce N-acetylglucosamine-1-phosphate (GlcNAc-1-P), which is converted into UDP-GlcNAc by the transfer of uridine 5-monophosphate (from uridine 5-triphosphate), a reaction catalyzed by the N-terminal domain. This chain is Bifunctional protein GlmU, found in Shigella sonnei (strain Ss046).